We begin with the raw amino-acid sequence, 307 residues long: 2-dehydropantoate 2-reductase (307 aa).

Residues 7–12 (GSGAMG), Asn102, and Ala128 each bind NADP(+). Asn102 serves as a coordination point for substrate. The active-site Proton donor is Lys184. Asn188, Asn192, and Ser255 together coordinate substrate. Glu268 provides a ligand contact to NADP(+).

The protein belongs to the ketopantoate reductase family.

It localises to the cytoplasm. The catalysed reaction is (R)-pantoate + NADP(+) = 2-dehydropantoate + NADPH + H(+). The protein operates within cofactor biosynthesis; (R)-pantothenate biosynthesis; (R)-pantoate from 3-methyl-2-oxobutanoate: step 2/2. Its function is as follows. Catalyzes the NADPH-dependent reduction of ketopantoate into pantoic acid. In Streptococcus pyogenes serotype M18 (strain MGAS8232), this protein is 2-dehydropantoate 2-reductase (apbA).